The sequence spans 64 residues: Thrombin-like enzyme collinein-4 (64 aa).

2 cysteine pairs are disulfide-bonded: cysteine 5–cysteine 23 and cysteine 34–cysteine 51.

As to quaternary structure, monomer. Expressed by the vanom gland.

The protein localises to the secreted. Its function is as follows. Thrombin-like snake venom serine protease. The sequence is that of Thrombin-like enzyme collinein-4 from Crotalus durissus collilineatus (Brazilian rattlesnake).